The chain runs to 177 residues: Novel acetylcholine receptor chaperone (177 aa).

The Cytoplasmic portion of the chain corresponds to 1-5 (MASPR). The helical transmembrane segment at 6-26 (TVTVVALSVALGLFFVFMGTI) threads the bilayer. The Lumenal segment spans residues 27 to 61 (KLTPRLSKDAYSEMKRAYKSYVRALPLLKKMGINS). An interaction with NGFR region spans residues 43–54 (AYKSYVRALPLL). The chain crosses the membrane as a helical span at residues 62-82 (ILLRKSIGALEVACGIVMTLV). Residues 83–88 (PGRPKD) are Cytoplasmic-facing. A helical membrane pass occupies residues 89 to 109 (VANFFLLLLVLAVLFFHQLVG). Residues 110 to 114 (DPLKR) lie on the Lumenal side of the membrane. Residues 115 to 132 (YAHALVFGILLTCRLLIA) traverse the membrane as a helical segment. Residues 133 to 177 (RKPEDRSSEKKSSPPGNAGSDGNAGNTEEQPSLYEKAPQGKMKLS) lie on the Cytoplasmic side of the membrane. The interval 136 to 177 (EDRSSEKKSSPPGNAGSDGNAGNTEEQPSLYEKAPQGKMKLS) is disordered.

This sequence belongs to the DoxX family. In terms of assembly, may interact with NGFR. Interacts with RPN1, RPN2 and CANX.

The protein resides in the peroxisome membrane. Its subcellular location is the cytoplasmic vesicle. The protein localises to the endoplasmic reticulum membrane. Functionally, molecular chaperone which mediates the proper assembly and functional expression of the nicotinic acetylcholine receptors (nAChRs) throughout the brain. Essential for the proper folding, assembly, function and surface trafficking of alpha-7 (CHRNA7), alpha-4-beta-2, alpha-3-beta-2 and alpha-3-beta-4 receptors. Stably associates with ribophorin-1 (RPN1) and ribophorin-2 (RPN2) (components of the oligosaccharyl transferase (OST) complex) and with calnexin (CANX), both of which are critical for NACHO-mediated effects on CHRNA7 assembly and function. Facilitates the proper folding and assembly of alpha-6-beta-2 and alpha-6-beta-2-beta-3 receptors and acts at early stages of the nAChRs subunit assembly. Promotes the expression of the alpha-4(2):beta-2(3) stoichiometric form over the alpha-4(3):beta-2(2) form. The protein is Novel acetylcholine receptor chaperone (TMEM35A) of Bos taurus (Bovine).